The sequence spans 528 residues: GMP synthase [glutamine-hydrolyzing] (528 aa).

A Glutamine amidotransferase type-1 domain is found at 13–204; sequence AIVILDFGSQ…VYDICSCEPD (192 aa). The active-site Nucleophile is C90. Residues H178 and E180 contribute to the active site. The region spanning 205–403 is the GMPS ATP-PPase domain; that stretch reads WTTNLFIDEA…LGLPDEIVRR (199 aa). 232–238 is a binding site for ATP; that stretch reads SGGVDSS.

As to quaternary structure, homodimer.

It catalyses the reaction XMP + L-glutamine + ATP + H2O = GMP + L-glutamate + AMP + diphosphate + 2 H(+). It participates in purine metabolism; GMP biosynthesis; GMP from XMP (L-Gln route): step 1/1. Functionally, catalyzes the synthesis of GMP from XMP. This Prochlorococcus marinus (strain NATL1A) protein is GMP synthase [glutamine-hydrolyzing].